Here is a 118-residue protein sequence, read N- to C-terminus: Holo-[acyl-carrier-protein] synthase (118 aa).

Residues Asp-8 and Glu-58 each contribute to the Mg(2+) site.

Belongs to the P-Pant transferase superfamily. AcpS family. Mg(2+) is required as a cofactor.

Its subcellular location is the cytoplasm. The catalysed reaction is apo-[ACP] + CoA = holo-[ACP] + adenosine 3',5'-bisphosphate + H(+). In terms of biological role, transfers the 4'-phosphopantetheine moiety from coenzyme A to a Ser of acyl-carrier-protein. The sequence is that of Holo-[acyl-carrier-protein] synthase from Streptococcus pyogenes serotype M12 (strain MGAS2096).